The primary structure comprises 56 residues: MFLRFYNRLLYIYNELFNFLRFTVFLPFCEFVPHHDLFYLIVTYQRTLVYKHKNDC.

This is an uncharacterized protein from Saccharomyces cerevisiae (strain ATCC 204508 / S288c) (Baker's yeast).